Consider the following 668-residue polypeptide: DNA ligase (668 aa).

NAD(+)-binding positions include 31-35 (DYDFD), 80-81 (SL), and E111. The active-site N6-AMP-lysine intermediate is K113. NAD(+) is bound by residues R134, E170, K285, and K309. The Zn(2+) site is built by C403, C406, C421, and C427. One can recognise a BRCT domain in the interval 587–668 (NATEKFIGKT…EFITKLNESE (82 aa)).

The protein belongs to the NAD-dependent DNA ligase family. LigA subfamily. Requires Mg(2+) as cofactor. The cofactor is Mn(2+).

The enzyme catalyses NAD(+) + (deoxyribonucleotide)n-3'-hydroxyl + 5'-phospho-(deoxyribonucleotide)m = (deoxyribonucleotide)n+m + AMP + beta-nicotinamide D-nucleotide.. Functionally, DNA ligase that catalyzes the formation of phosphodiester linkages between 5'-phosphoryl and 3'-hydroxyl groups in double-stranded DNA using NAD as a coenzyme and as the energy source for the reaction. It is essential for DNA replication and repair of damaged DNA. The polypeptide is DNA ligase (Flavobacterium johnsoniae (strain ATCC 17061 / DSM 2064 / JCM 8514 / BCRC 14874 / CCUG 350202 / NBRC 14942 / NCIMB 11054 / UW101) (Cytophaga johnsonae)).